We begin with the raw amino-acid sequence, 329 residues long: Phosphate acyltransferase (329 aa).

This sequence belongs to the PlsX family. As to quaternary structure, homodimer. Probably interacts with PlsY.

It is found in the cytoplasm. It carries out the reaction a fatty acyl-[ACP] + phosphate = an acyl phosphate + holo-[ACP]. Its pathway is lipid metabolism; phospholipid metabolism. Catalyzes the reversible formation of acyl-phosphate (acyl-PO(4)) from acyl-[acyl-carrier-protein] (acyl-ACP). This enzyme utilizes acyl-ACP as fatty acyl donor, but not acyl-CoA. The protein is Phosphate acyltransferase of Shouchella clausii (strain KSM-K16) (Alkalihalobacillus clausii).